A 1259-amino-acid polypeptide reads, in one-letter code: uncharacterized protein (1259 aa).

The tract at residues 354 to 410 is disordered; the sequence is KLNQAGGKRNSSMNNSTQNNNSSRSNNSARNNNSVWNNNNSAWKNNNSAWNDNSSWK. Over residues 362-410 the composition is skewed to low complexity; that stretch reads RNSSMNNSTQNNNSSRSNNSARNNNSVWNNNNSAWKNNNSAWNDNSSWK.

It localises to the virion. This is an uncharacterized protein from Acanthamoeba polyphaga (Amoeba).